A 168-amino-acid polypeptide reads, in one-letter code: MQAPFPKNSANLTHLDGQGQAQMVDVSDKAQTIRQAVAAAQVRMLPATLEAIQAGNTPKGDVLATARLAGIMAAKQTANLIPLCHPLPLQKVAVEITPDPQLPGYQIQATVKTKAETGVEMEALTAVSIAALTLYDMAKALEKSMQIESIRLVSKTGGKSGDYFPPAP.

Residues leucine 83–histidine 85 and methionine 121–glutamate 122 each bind substrate. Aspartate 136 is an active-site residue.

The protein belongs to the MoaC family. As to quaternary structure, homohexamer; trimer of dimers.

It carries out the reaction (8S)-3',8-cyclo-7,8-dihydroguanosine 5'-triphosphate = cyclic pyranopterin phosphate + diphosphate. Its pathway is cofactor biosynthesis; molybdopterin biosynthesis. Catalyzes the conversion of (8S)-3',8-cyclo-7,8-dihydroguanosine 5'-triphosphate to cyclic pyranopterin monophosphate (cPMP). This is Cyclic pyranopterin monophosphate synthase from Nostoc sp. (strain PCC 7120 / SAG 25.82 / UTEX 2576).